A 353-amino-acid chain; its full sequence is Putative glycosyltransferase TagX (353 aa).

The protein belongs to the glycosyltransferase 2 family.

This chain is Putative glycosyltransferase TagX (tagX), found in Staphylococcus aureus (strain MSSA476).